We begin with the raw amino-acid sequence, 466 residues long: F-box only protein 15 (466 aa).

An F-box domain is found at 27–73 (SASLDSLPSEVLLKILSYLDAAALLCAGCVNRRFYHLANDNFIWIRI).

Directly interacts with SKP1 and CUL1.

Functionally, substrate-recognition component of the SCF (SKP1-CUL1-F-box protein)-type E3 ubiquitin ligase complex. This is F-box only protein 15 (FBXO15) from Bos taurus (Bovine).